Reading from the N-terminus, the 536-residue chain is Transcription factor cheR (536 aa).

The zn(2)-C6 fungal-type DNA-binding region spans C19–C57. 2 disordered regions span residues A70 to T122 and A220 to E243. The span at A88–R108 shows a compositional bias: low complexity.

It localises to the nucleus. Transcription factor; part of the gene cluster that mediates the biosynthesis of chaetoglobosin A which has a unique inhibitory activity against actin polymerization in mammalian cells. Chaetoglobosin A and its intermediates are involved in the morphological differentiation of C.globosum. Binds directly to asymmetric direct repeats present in the promoters of the chaetoglobosin A cluster genes. The polypeptide is Transcription factor cheR (Chaetomium globosum (strain ATCC 6205 / CBS 148.51 / DSM 1962 / NBRC 6347 / NRRL 1970) (Soil fungus)).